Here is a 294-residue protein sequence, read N- to C-terminus: 4-hydroxy-tetrahydrodipicolinate synthase (294 aa).

T44 contributes to the pyruvate binding site. The active-site Proton donor/acceptor is Y132. Residue K161 is the Schiff-base intermediate with substrate of the active site. I206 is a pyruvate binding site.

This sequence belongs to the DapA family. In terms of assembly, homotetramer; dimer of dimers.

The protein localises to the cytoplasm. It carries out the reaction L-aspartate 4-semialdehyde + pyruvate = (2S,4S)-4-hydroxy-2,3,4,5-tetrahydrodipicolinate + H2O + H(+). The protein operates within amino-acid biosynthesis; L-lysine biosynthesis via DAP pathway; (S)-tetrahydrodipicolinate from L-aspartate: step 3/4. In terms of biological role, catalyzes the condensation of (S)-aspartate-beta-semialdehyde [(S)-ASA] and pyruvate to 4-hydroxy-tetrahydrodipicolinate (HTPA). This is 4-hydroxy-tetrahydrodipicolinate synthase from Thermotoga neapolitana (strain ATCC 49049 / DSM 4359 / NBRC 107923 / NS-E).